Consider the following 234-residue polypeptide: ATP synthase subunit a 1 (234 aa).

Transmembrane regions (helical) follow at residues 29–49 (FLVH…VALL), 90–110 (LIAT…IPGF), 116–136 (NLNT…VVGV), 147–167 (FVGP…IGHL), 186–206 (IVLV…MMLM), and 207–227 (GILV…IYIA).

The protein belongs to the ATPase A chain family. In terms of assembly, F-type ATPases have 2 components, CF(1) - the catalytic core - and CF(0) - the membrane proton channel. CF(1) has five subunits: alpha(3), beta(3), gamma(1), delta(1), epsilon(1). CF(0) has three main subunits: a(1), b(2) and c(9-12). The alpha and beta chains form an alternating ring which encloses part of the gamma chain. CF(1) is attached to CF(0) by a central stalk formed by the gamma and epsilon chains, while a peripheral stalk is formed by the delta and b chains.

It localises to the cell inner membrane. Its function is as follows. Key component of the proton channel; it plays a direct role in the translocation of protons across the membrane. This is ATP synthase subunit a 1 from Syntrophotalea carbinolica (strain DSM 2380 / NBRC 103641 / GraBd1) (Pelobacter carbinolicus).